Reading from the N-terminus, the 920-residue chain is Isoleucine--tRNA ligase (920 aa).

Residues 58 to 68 (PYANGHLHLGH) carry the 'HIGH' region motif. Glu569 serves as a coordination point for L-isoleucyl-5'-AMP. The 'KMSKS' region signature appears at 610 to 614 (KMSKS). An ATP-binding site is contributed by Lys613. Cys895, Cys898, Cys910, and Cys913 together coordinate Zn(2+).

This sequence belongs to the class-I aminoacyl-tRNA synthetase family. IleS type 1 subfamily. In terms of assembly, monomer. Zn(2+) serves as cofactor.

It is found in the cytoplasm. The catalysed reaction is tRNA(Ile) + L-isoleucine + ATP = L-isoleucyl-tRNA(Ile) + AMP + diphosphate. Catalyzes the attachment of isoleucine to tRNA(Ile). As IleRS can inadvertently accommodate and process structurally similar amino acids such as valine, to avoid such errors it has two additional distinct tRNA(Ile)-dependent editing activities. One activity is designated as 'pretransfer' editing and involves the hydrolysis of activated Val-AMP. The other activity is designated 'posttransfer' editing and involves deacylation of mischarged Val-tRNA(Ile). This chain is Isoleucine--tRNA ligase, found in Helicobacter pylori (strain G27).